The following is a 317-amino-acid chain: Beta-ketoacyl-[acyl-carrier-protein] synthase III (317 aa).

Catalysis depends on residues Cys-112 and His-244. Residues 245-249 (QANLR) are ACP-binding. The active site involves Asn-274.

Belongs to the thiolase-like superfamily. FabH family. In terms of assembly, homodimer.

The protein resides in the cytoplasm. It carries out the reaction malonyl-[ACP] + acetyl-CoA + H(+) = 3-oxobutanoyl-[ACP] + CO2 + CoA. Its pathway is lipid metabolism; fatty acid biosynthesis. In terms of biological role, catalyzes the condensation reaction of fatty acid synthesis by the addition to an acyl acceptor of two carbons from malonyl-ACP. Catalyzes the first condensation reaction which initiates fatty acid synthesis and may therefore play a role in governing the total rate of fatty acid production. Possesses both acetoacetyl-ACP synthase and acetyl transacylase activities. Its substrate specificity determines the biosynthesis of branched-chain and/or straight-chain of fatty acids. The sequence is that of Beta-ketoacyl-[acyl-carrier-protein] synthase III from Escherichia coli O9:H4 (strain HS).